The primary structure comprises 331 residues: Gamma-parvin (331 aa).

Met-1 carries the post-translational modification N-acetylmethionine. Positions 18–38 are disordered; it reads QPTEEELPRGGKKKYLSPNSK. Calponin-homology (CH) domains are found at residues 44–151 and 210–317; these read EELQ…KRFQ and HAVQ…QKHS.

This sequence belongs to the parvin family. As to quaternary structure, interacts with ILK; the interaction promotes the establishment of cell polarity required for leukocyte migration. Interacts with ARHGEF6; the guanine nucleotide exchange factor activity of ARHGEF6 is essential for the PARVG-induced enhancement of cell spreading. In terms of tissue distribution, expressed strongly in spleen and testis, moderately in lung and weakly in brain and heart.

The protein localises to the cell junction. It is found in the focal adhesion. The protein resides in the cell membrane. Its subcellular location is the cytoplasm. It localises to the cytoskeleton. In terms of biological role, plays a role with ILK in promoting the cell adhesion and spreading of leukocytes. This Mus musculus (Mouse) protein is Gamma-parvin (Parvg).